Here is a 326-residue protein sequence, read N- to C-terminus: UDP-N-acetylglucosamine transporter (326 aa).

Helical transmembrane passes span Asn4–Met24, Leu38–Val58, Leu136–Trp156, Phe174–Phe194, Leu212–Val232, Gln243–Ile263, Ile269–Trp289, and Phe293–Tyr313.

This sequence belongs to the nucleotide-sugar transporter family. SLC35A subfamily. In terms of assembly, interacts with SLC35A2; the interaction is reduced in the presence of SLC35A4. Found in a complex with SLC35A2 and SLC35A4. Interacts with MGAT4B. In terms of processing, O-Glcnacylation regulates the stability of SLC35A3 and the specific complex formation with MGAT4B.

It is found in the golgi apparatus membrane. The enzyme catalyses UMP(out) + UDP-N-acetyl-alpha-D-glucosamine(in) = UMP(in) + UDP-N-acetyl-alpha-D-glucosamine(out). Functionally, transports diphosphate-N-acetylglucosamine (UDP-GlcNAc) from the cytosol into the lumen of the Golgi apparatus, functioning as an antiporter that exchanges UDP-N-acetyl-alpha-D-glucosamine for UMP. May supply UDP-GlcNAc as substrate for Golgi-resident glycosyltransferases that generate highly branched, multiantennary complex N-glycans and keratan sulfate. However, the exact role of SLC35A3 still needs to be elucidated, it could be a member of a catalytically more efficient multiprotein complex rather than function independently as a single transporter. The chain is UDP-N-acetylglucosamine transporter (Slc35a3) from Mus musculus (Mouse).